A 260-amino-acid chain; its full sequence is Isoprenyl transferase (260 aa).

Asp40 is an active-site residue. Asp40 contributes to the Mg(2+) binding site. Residues 41-44, Trp45, Arg53, His57, and 85-87 contribute to the substrate site; these read GNGR and STE. Asn88 functions as the Proton acceptor in the catalytic mechanism. Substrate contacts are provided by residues Trp89, Arg91, Arg208, and 214–216; that span reads RLS. Glu227 serves as a coordination point for Mg(2+).

It belongs to the UPP synthase family. In terms of assembly, homodimer. Mg(2+) serves as cofactor.

In terms of biological role, catalyzes the condensation of isopentenyl diphosphate (IPP) with allylic pyrophosphates generating different type of terpenoids. The chain is Isoprenyl transferase from Bacillus subtilis (strain 168).